Consider the following 287-residue polypeptide: ATP synthase gamma chain (287 aa).

It belongs to the ATPase gamma chain family. F-type ATPases have 2 components, CF(1) - the catalytic core - and CF(0) - the membrane proton channel. CF(1) has five subunits: alpha(3), beta(3), gamma(1), delta(1), epsilon(1). CF(0) has three main subunits: a, b and c.

Its subcellular location is the cell inner membrane. Functionally, produces ATP from ADP in the presence of a proton gradient across the membrane. The gamma chain is believed to be important in regulating ATPase activity and the flow of protons through the CF(0) complex. This is ATP synthase gamma chain from Geotalea daltonii (strain DSM 22248 / JCM 15807 / FRC-32) (Geobacter daltonii).